A 451-amino-acid polypeptide reads, in one-letter code: Chromosomal replication initiator protein DnaA (451 aa).

The interval 1–71 is domain I, interacts with DnaA modulators; sequence MSEKEIWDKV…QAIIYDVIGY (71 aa). Positions 71 to 112 are domain II; it reads YEVKPHFISEDELASYNNVNTQEVQEPQVQHSSIDDKTWGKE. Positions 113–329 are domain III, AAA+ region; that stretch reads QFNMHNTFDT…GALTRLLAYS (217 aa). ATP-binding residues include glycine 157, glycine 159, lysine 160, and threonine 161. A domain IV, binds dsDNA region spans residues 330–451; the sequence is KLQGKPITTE…ENLEKEIRNQ (122 aa).

This sequence belongs to the DnaA family. As to quaternary structure, oligomerizes as a right-handed, spiral filament on DNA at oriC.

The protein resides in the cytoplasm. Plays an essential role in the initiation and regulation of chromosomal replication. ATP-DnaA binds to the origin of replication (oriC) to initiate formation of the DNA replication initiation complex once per cell cycle. Binds the DnaA box (a 9 base pair repeat at the origin) and separates the double-stranded (ds)DNA. Forms a right-handed helical filament on oriC DNA; dsDNA binds to the exterior of the filament while single-stranded (ss)DNA is stabiized in the filament's interior. The ATP-DnaA-oriC complex binds and stabilizes one strand of the AT-rich DNA unwinding element (DUE), permitting loading of DNA polymerase. After initiation quickly degrades to an ADP-DnaA complex that is not apt for DNA replication. Binds acidic phospholipids. In Staphylococcus epidermidis (strain ATCC 12228 / FDA PCI 1200), this protein is Chromosomal replication initiator protein DnaA.